A 1026-amino-acid chain; its full sequence is Contactin-4 (1026 aa).

An N-terminal signal peptide occupies residues 1 to 18 (MRLPWELLVLQSFILCLA). Ig-like C2-type domains follow at residues 32 to 117 (PSPV…AKLQ), 122 to 207 (DNFK…KVLG), 225 to 311 (PKIE…GQLT), 316 to 400 (PNWI…AELS), 406 to 493 (PDFS…GNLV), and 497 to 586 (PTRV…DRLS). 6 cysteine pairs are disulfide-bonded: C50–C100, C144–C194, C247–C295, C337–C384, C429–C477, and C519–C576. 3 N-linked (GlcNAc...) asparagine glycosylation sites follow: N65, N90, and N191. N370, N375, and N466 each carry an N-linked (GlcNAc...) asparagine glycan. 4 Fibronectin type-III domains span residues 599-697 (PPEA…TEEA), 702-799 (TPAN…SAEE), 804-899 (PPAS…TRKP), and 900-995 (PPSQ…ISNA). Residues 685 to 710 (PSRPSEKRRTEEALPEVTPANVSGGG) form a disordered region. Positions 687–696 (RPSEKRRTEE) are enriched in basic and acidic residues. 7 N-linked (GlcNAc...) asparagine glycosylation sites follow: N705, N764, N858, N893, N911, N929, and N954. Residues 886–896 (GPSSATVNVTT) show a composition bias toward polar residues. The segment at 886-907 (GPSSATVNVTTRKPPPSQPPGN) is disordered. A lipid anchor (GPI-anchor amidated serine) is attached at S1000. The propeptide at 1001-1026 (GASTSNACTLSAISTIMISLTARSSL) is removed in mature form.

The protein belongs to the immunoglobulin superfamily. Contactin family. Interacts with PTPRG. Mainly expressed in brain. Highly expressed in cerebellum and weakly expressed in corpus callosum, caudate nucleus, amygdala and spinal cord. Also expressed in testis, pancreas, thyroid, uterus, small intestine and kidney. Not expressed in skeletal muscle. Isoform 2 is weakly expressed in cerebral cortex.

It localises to the cell membrane. Its subcellular location is the secreted. Functionally, contactins mediate cell surface interactions during nervous system development. Has some neurite outgrowth-promoting activity. May be involved in synaptogenesis. This chain is Contactin-4 (CNTN4), found in Homo sapiens (Human).